Reading from the N-terminus, the 74-residue chain is Exodeoxyribonuclease 7 small subunit (74 aa).

This sequence belongs to the XseB family. In terms of assembly, heterooligomer composed of large and small subunits.

Its subcellular location is the cytoplasm. The enzyme catalyses Exonucleolytic cleavage in either 5'- to 3'- or 3'- to 5'-direction to yield nucleoside 5'-phosphates.. Functionally, bidirectionally degrades single-stranded DNA into large acid-insoluble oligonucleotides, which are then degraded further into small acid-soluble oligonucleotides. The protein is Exodeoxyribonuclease 7 small subunit of Glaesserella parasuis serovar 5 (strain SH0165) (Haemophilus parasuis).